The following is a 310-amino-acid chain: Deoxypodophyllotoxin synthase (310 aa).

The 100-residue stretch at 159–258 (STNYLLHFMR…RLSTSSFSFP (100 aa)) folds into the Fe2OG dioxygenase domain. Residues His184, Asp186, and His239 each coordinate Fe cation. Position 249 (Arg249) interacts with 2-oxoglutarate.

The protein belongs to the iron/ascorbate-dependent oxidoreductase family. Fe(2+) is required as a cofactor. In terms of tissue distribution, mostly expressed in leaves and stems.

It catalyses the reaction (-)-yatein + 2-oxoglutarate + O2 = (-)-deoxypodophyllotoxin + succinate + CO2 + H2O. It participates in aromatic compound metabolism; phenylpropanoid biosynthesis. Functionally, 2-oxoglutarate-dependent dioxygenase involved in the biosynthesis of etoposide, a chemotherapeutic compound of the topoisomerase inhibitor family. Catalyzes the conversion of yatein to deoxypodophyllotoxin. Can also use, to some extent, demethylyatein as substrate. The chain is Deoxypodophyllotoxin synthase from Sinopodophyllum hexandrum (Himalayan may apple).